The following is a 596-amino-acid chain: Nuclear receptor subfamily 2 group C member 2 (596 aa).

Position 19 is a phosphoserine; by MAPK (Ser19). Position 46 is a phosphoserine (Ser46). Phosphoserine; by MAPK is present on residues Ser55 and Ser68. A Phosphoserine modification is found at Ser98. A DNA-binding region (nuclear receptor) is located at residues 114 to 189; that stretch reads VEYCVVCGDK…MGMKMESVQS (76 aa). NR C4-type zinc fingers lie at residues 117–137 and 153–177; these read CVVC…CEGC and CRSN…LKKC. A Glycyl lysine isopeptide (Lys-Gly) (interchain with G-Cter in SUMO2) cross-link involves residue Lys192. Position 219 is a phosphoserine (Ser219). Lys231 is subject to N6-acetyllysine. Positions 341–583 constitute an NR LBD domain; that stretch reads GSIHVISRDQ…SIIPYILKME (243 aa).

Belongs to the nuclear hormone receptor family. NR2 subfamily. As to quaternary structure, homodimer; can bind DNA as homodimer. Heterodimer; binds DNA as a heterodimer with NR2C1 required for chromatin remodeling and for binding to promoter regions such as globin DR1 repeats. Interacts with PCAF; the interaction preferentially occurs on the non-phosphorylated form and induces NR2C2-mediated transactivation activity and does not require the ligand-binding domain. Interacts (MAPK-mediated phosphorylated form) with NRIP1; the interaction promotes repression of NR2C2-mediated activity. Interacts with NR2C2AP; the interaction represses selective NR2C2-mediated transcriptional activity. Interacts with NLRP10. Interacts (via ligand-binding region) with transcriptional corepressor JAZF1; the interaction promotes NR2C2-mediated transcriptional repression. Post-translationally, phosphorylation on Ser-19 and Ser-68 is an important regulator of NR2C2-mediated transcriptional activity. Phosphorylation on these residues recruits the corepressor, NRIP1, leading to transcripional repression, whereas the non-phosphorylated form preferentially recruits the coactivator, PCAF.

It localises to the nucleus. Orphan nuclear receptor that can act as a repressor or activator of transcription. An important repressor of nuclear receptor signaling pathways such as retinoic acid receptor, retinoid X, vitamin D3 receptor, thyroid hormone receptor and estrogen receptor pathways. May regulate gene expression during the late phase of spermatogenesis. Together with NR2C1, forms the core of the DRED (direct repeat erythroid-definitive) complex that represses embryonic and fetal globin transcription including that of GATA1. Binds to hormone response elements (HREs) consisting of two 5'-AGGTCA-3' half site direct repeat consensus sequences. Plays a fundamental role in early embryonic development and embryonic stem cells. Required for normal spermatogenesis and cerebellum development. Appears to be important for neurodevelopmentally regulated behavior. Activates transcriptional activity of LHCG. Antagonist of PPARA-mediated transactivation. The chain is Nuclear receptor subfamily 2 group C member 2 (NR2C2) from Homo sapiens (Human).